The chain runs to 704 residues: E3 ubiquitin-protein ligase MBR1 (704 aa).

6 disordered regions span residues methionine 1–valine 20, asparagine 37–histidine 61, serine 176–glycine 197, leucine 245–glutamine 354, serine 381–asparagine 403, and serine 436–arginine 525. Polar residues predominate over residues phenylalanine 43–histidine 61. Composition is skewed to low complexity over residues alanine 184 to phenylalanine 196 and leucine 245 to proline 255. Polar residues-rich tracts occupy residues phenylalanine 281–leucine 290, arginine 300–leucine 329, and arginine 340–glutamine 354. Positions glutamine 452–asparagine 467 are enriched in pro residues. Residues serine 485–serine 505 show a composition bias toward low complexity. An RING-type; atypical zinc finger spans residues cysteine 656–lysine 697.

The protein belongs to the RING-type zinc finger family. Interacts with MED25 and UBC11.

It carries out the reaction S-ubiquitinyl-[E2 ubiquitin-conjugating enzyme]-L-cysteine + [acceptor protein]-L-lysine = [E2 ubiquitin-conjugating enzyme]-L-cysteine + N(6)-ubiquitinyl-[acceptor protein]-L-lysine.. The protein operates within protein modification; protein ubiquitination. Its function is as follows. E3 ubiquitin-protein ligase that functions as a regulator of MED25 stability by targeting MED25 for degradation in a RING-H2-dependent way. Proteasome-dependent degradation of MED25 seems to activate its function as positive regulator of FLOWERING LOCUS T (FT) and is important to induce the expression of FT and consequently to promote flowering. The chain is E3 ubiquitin-protein ligase MBR1 (MBR1) from Arabidopsis thaliana (Mouse-ear cress).